The primary structure comprises 336 residues: Type II methyltransferase M.PvuII (336 aa).

2 tandem repeats follow at residues 11-113 and 181-293. The disordered stretch occupies residues 196-215; that stretch reads TPKTRPSGHDIGKSFSKDNG. The segment covering 202-211 has biased composition (basic and acidic residues); the sequence is SGHDIGKSFS.

The protein belongs to the N(4)/N(6)-methyltransferase family. N(4) subfamily. In terms of assembly, monomer.

The catalysed reaction is a 2'-deoxycytidine in DNA + S-adenosyl-L-methionine = an N(4)-methyl-2'-deoxycytidine in DNA + S-adenosyl-L-homocysteine + H(+). A beta subtype methylase, recognizes the double-stranded sequence 5'-CAGCTG-3', methylates C-4 on both strands, and protects the DNA from cleavage by the PvuII endonuclease. This is Type II methyltransferase M.PvuII from Proteus hauseri.